Consider the following 73-residue polypeptide: Conotoxin Im14.3 (73 aa).

A signal peptide spans 1–17; that stretch reads MGVFRCCLAAALVVVCL. The propeptide occupies 18–35; sequence SRMGGTEPLESNHEDERR. Positions 22–42 are disordered; that stretch reads GTEPLESNHEDERRADDTSGD. The span at 27-38 shows a compositional bias: basic and acidic residues; that stretch reads ESNHEDERRADD. A ShKT domain is found at 44–73; it reads CVDTNEDCVNWASTGQCEANPSYMRENCRK.

Contain 2 disulfide bonds. In terms of tissue distribution, expressed by the venom duct.

It localises to the secreted. Functionally, probable neurotoxin. This chain is Conotoxin Im14.3, found in Conus imperialis (Imperial cone).